Consider the following 329-residue polypeptide: Acrosin (329 aa).

The signal sequence occupies residues 1–17 (MLPTAVLLVLAVSVVAR). A glycan (N-linked (GlcNAc...) asparagine) is linked at Asn19. Intrachain disulfides connect Cys22–Cys152, Cys26–Cys160, Cys71–Cys87, Cys175–Cys244, Cys207–Cys223, and Cys234–Cys264. Positions 40 to 288 (IIGGQDAAHG…YLNWIASKIG (249 aa)) constitute a Peptidase S1 domain. Active-site charge relay system residues include His86 and Asp140. The N-linked (GlcNAc...) asparagine glycan is linked to Asn208. Ser238 functions as the Charge relay system in the catalytic mechanism.

Belongs to the peptidase S1 family. As to quaternary structure, heavy chain (catalytic) and a light chain linked by two disulfide bonds. Forms a heterodimer with SERPINA5.

The enzyme catalyses Preferential cleavage: Arg-|-Xaa, Lys-|-Xaa.. Inhibited by SERPINA5. Acrosin is the major protease of mammalian spermatozoa. It is a serine protease of trypsin-like cleavage specificity, it is synthesized in a zymogen form, proacrosin and stored in the acrosome. This chain is Acrosin (ACR), found in Ovis aries (Sheep).